The chain runs to 356 residues: Biotin synthase (356 aa).

One can recognise a Radical SAM core domain in the interval glycine 54–leucine 278. Cysteine 69, cysteine 73, and cysteine 76 together coordinate [4Fe-4S] cluster. Cysteine 113, cysteine 144, cysteine 204, and arginine 282 together coordinate [2Fe-2S] cluster.

Belongs to the radical SAM superfamily. Biotin synthase family. Homodimer. It depends on [4Fe-4S] cluster as a cofactor. [2Fe-2S] cluster serves as cofactor.

The enzyme catalyses (4R,5S)-dethiobiotin + (sulfur carrier)-SH + 2 reduced [2Fe-2S]-[ferredoxin] + 2 S-adenosyl-L-methionine = (sulfur carrier)-H + biotin + 2 5'-deoxyadenosine + 2 L-methionine + 2 oxidized [2Fe-2S]-[ferredoxin]. The protein operates within cofactor biosynthesis; biotin biosynthesis; biotin from 7,8-diaminononanoate: step 2/2. In terms of biological role, catalyzes the conversion of dethiobiotin (DTB) to biotin by the insertion of a sulfur atom into dethiobiotin via a radical-based mechanism. This chain is Biotin synthase, found in Novosphingobium aromaticivorans (strain ATCC 700278 / DSM 12444 / CCUG 56034 / CIP 105152 / NBRC 16084 / F199).